The primary structure comprises 343 residues: Glycerol-3-phosphate dehydrogenase [NAD(P)+] (343 aa).

NADPH-binding residues include Trp-29, Arg-49, and Lys-122. Positions 122, 150, and 152 each coordinate sn-glycerol 3-phosphate. Residue Ala-154 participates in NADPH binding. Sn-glycerol 3-phosphate is bound by residues Lys-205, Asp-258, Ser-268, Arg-269, and Asn-270. The active-site Proton acceptor is Lys-205. Position 269 (Arg-269) interacts with NADPH. NADPH is bound by residues Leu-288 and Glu-290.

The protein belongs to the NAD-dependent glycerol-3-phosphate dehydrogenase family.

It is found in the cytoplasm. The enzyme catalyses sn-glycerol 3-phosphate + NAD(+) = dihydroxyacetone phosphate + NADH + H(+). The catalysed reaction is sn-glycerol 3-phosphate + NADP(+) = dihydroxyacetone phosphate + NADPH + H(+). The protein operates within membrane lipid metabolism; glycerophospholipid metabolism. Functionally, catalyzes the reduction of the glycolytic intermediate dihydroxyacetone phosphate (DHAP) to sn-glycerol 3-phosphate (G3P), the key precursor for phospholipid synthesis. This chain is Glycerol-3-phosphate dehydrogenase [NAD(P)+], found in Mesorhizobium japonicum (strain LMG 29417 / CECT 9101 / MAFF 303099) (Mesorhizobium loti (strain MAFF 303099)).